A 555-amino-acid chain; its full sequence is Potassium-transporting ATPase potassium-binding subunit (555 aa).

10 consecutive transmembrane segments (helical) span residues 2-22, 60-80, 130-150, 173-193, 246-266, 278-298, 374-394, 412-432, 483-503, and 525-545; these read IWVA…PTGV, QYAL…YFIF, IGIT…VMAF, VFLP…VPQT, MSNI…PFTY, ILFV…TTSE, AGFV…GLMV, LIAV…ALAL, LVMF…AASL, and GIFI…MLVL.

The protein belongs to the KdpA family. As to quaternary structure, the system is composed of three essential subunits: KdpA, KdpB and KdpC.

The protein localises to the cell membrane. Part of the high-affinity ATP-driven potassium transport (or Kdp) system, which catalyzes the hydrolysis of ATP coupled with the electrogenic transport of potassium into the cytoplasm. This subunit binds the extracellular potassium ions and delivers the ions to the membrane domain of KdpB through an intramembrane tunnel. The sequence is that of Potassium-transporting ATPase potassium-binding subunit from Bacillus cereus (strain B4264).